Reading from the N-terminus, the 1481-residue chain is Cystic fibrosis transmembrane conductance regulator (1481 aa).

Residues 1 to 77 (MQRSPLEKAS…KLINALRRCF (77 aa)) lie on the Cytoplasmic side of the membrane. A helical transmembrane segment spans residues 78-98 (FWRFMFYGILLYLGEVTKAVQ). The ABC transmembrane type-1 1 domain maps to 81 to 365 (FMFYGILLYL…WAVQTWYDSL (285 aa)). Over 99-122 (PLLLGRIIASYDPDNKEERSIAIY) the chain is Extracellular. Residues 123 to 146 (LGIGLCLLFIVRTLLLHPAIFGLH) form a helical membrane-spanning segment. The Cytoplasmic portion of the chain corresponds to 147–195 (HIGMQMRIAMFSLIYKKTLKLSSRVLDKISIGQLVSLLSNNLNKFDEGL). Residues 196–216 (ALAHFVWIVPLQVALLMGLIW) traverse the membrane as a helical segment. The Extracellular portion of the chain corresponds to 217 to 222 (ELLQAS). The chain crosses the membrane as a helical span at residues 223–243 (AFCGLGFLIVLALFQAGLGRM). The Cytoplasmic segment spans residues 244 to 298 (MMKYRDQRAGKINERLVITSEMIENIQSVKAYCWEEAMEKMIENLRQTELKLTRK). Residues 299-319 (AAYVRYFNSSAFFFSGFFVVF) traverse the membrane as a helical segment. Residues 320–339 (LSVLPYALIKGIVLRKIFTT) are Extracellular-facing. The helical transmembrane segment at 340-358 (ISFCIVLRMAVTRQFPWAV) threads the bilayer. The Cytoplasmic portion of the chain corresponds to 359–858 (QTWYDSLGAI…YLRYITVHKS (500 aa)). ATP contacts are provided by residues tryptophan 401, serine 434, 458–465 (GSTGAGKT), and glutamine 493. In terms of domain architecture, ABC transporter 1 spans 423-646 (NDDDSLFFSN…RPDFSSKLMG (224 aa)). Cysteine 524 is lipidated: S-palmitoyl cysteine. Residues serine 549 and serine 660 each carry the phosphoserine modification. Positions 654–831 (SAERRNSILT…EEINEEDLKE (178 aa)) are disordered R region. Serine 670 bears the Phosphoserine; by PKA mark. Serine 686 bears the Phosphoserine mark. Lysine 688 is covalently cross-linked (Glycyl lysine isopeptide (Lys-Gly) (interchain with G-Cter in ubiquitin)). Phosphoserine occurs at positions 700 and 712. Threonine 717 is modified (phosphothreonine). A phosphoserine mark is found at serine 737, serine 753, serine 768, serine 790, serine 795, and serine 813. A helical membrane pass occupies residues 859-879 (LIFVLIWCLVIFLAEVAASLV). In terms of domain architecture, ABC transmembrane type-1 2 spans 859–1155 (LIFVLIWCLV…AVNSSIDVDS (297 aa)). At 880–918 (VLWFLGNTPPQDKGNSTYSRNNSYAVIITRTSSYYVFYI) the chain is on the extracellular side. Residues asparagine 894 and asparagine 900 are each glycosylated (N-linked (GlcNAc...) asparagine). A discontinuously helical transmembrane segment spans residues 919–939 (YVGVADTLLAMGFFRGLPLVH). At 940-990 (TLITVSKILHHKMLHSVLQAPMSTLNTLKAGGILNRFSKDIAILDDLLPLT) the chain is on the cytoplasmic side. The helical transmembrane segment at 991 to 1011 (IFDFIQLLLIVIGAIAVVAVL) threads the bilayer. Over 1012–1013 (QP) the chain is Extracellular. Residues 1014-1034 (YIFVATVPVIVAFIMLRAYFL) form a helical membrane-spanning segment. Residues 1035 to 1095 (QTSQQLKQLE…TANWFLYLST (61 aa)) lie on the Cytoplasmic side of the membrane. The helical transmembrane segment at 1096–1116 (LRWFQMRIEMIFVIFFIAVTF) threads the bilayer. The Extracellular segment spans residues 1117–1130 (ISILTTGEGEGTVG). Residues 1131–1151 (IILTLAMNIMSTLQWAVNSSI) traverse the membrane as a helical segment. At 1152–1481 (DVDSLMRSVS…TEEEVQDTRL (330 aa)) the chain is on the cytoplasmic side. The region spanning 1211-1444 (MTVKDLTAKY…RSLFRQAISP (234 aa)) is the ABC transporter 2 domain. ATP contacts are provided by residues tyrosine 1220 and 1245 to 1252 (GRTGSGKS). The interval 1387 to 1481 (RTLKQAFADC…TEEEVQDTRL (95 aa)) is interaction with GORASP2. Residue cysteine 1396 is the site of S-palmitoyl cysteine attachment. A phosphoserine mark is found at serine 1445 and serine 1457. The disordered stretch occupies residues 1462–1481 (QPQIAALKEETEEEVQDTRL). Over residues 1471–1481 (ETEEEVQDTRL) the composition is skewed to acidic residues. The PDZ-binding signature appears at 1479–1481 (TRL).

It belongs to the ABC transporter superfamily. ABCC family. CFTR transporter (TC 3.A.1.202) subfamily. As to quaternary structure, monomer; does not require oligomerization for channel activity. May form oligomers in the membrane. Interacts with SLC26A3, SLC26A6 and NHERF1. Interacts with SHANK2. Interacts with MYO6. Interacts (via C-terminus) with GOPC (via PDZ domain); this promotes CFTR internalization and thereby decreases channel activity. Interacts with SLC4A7 through NHERF1. Found in a complex with MYO5B and RAB11A. Interacts with ANO1. Interacts with SLC26A8. Interacts with AHCYL1; the interaction increases CFTR activity. Interacts with CSE1L. The core-glycosylated form interacts with GORASP2 (via PDZ GRASP-type 1 domain) in respone to ER stress. Interacts with MARCHF2; the interaction leads to CFTR ubiqtuitination and degradation. Interacts with ADGRG2. In terms of processing, N-glycosylated. Phosphorylated; cAMP treatment promotes phosphorylation and activates the channel. Dephosphorylation decreases the ATPase activity (in vitro). Phosphorylation at PKA sites activates the channel. Phosphorylation at PKC sites enhances the response to phosphorylation by PKA. Phosphorylated by AMPK; this inhibits channel activity. Post-translationally, ubiquitinated, leading to its degradation in the lysosome. Deubiquitination by USP10 in early endosomes enhances its endocytic recycling to the cell membrane. Ubiquitinated by RNF185 during ER stress. Ubiquitinated by MARCHF2.

Its subcellular location is the apical cell membrane. The protein resides in the early endosome membrane. It is found in the cell membrane. It localises to the recycling endosome membrane. The protein localises to the endoplasmic reticulum membrane. Its subcellular location is the nucleus. The catalysed reaction is ATP + H2O + closed Cl(-) channel = ADP + phosphate + open Cl(-) channel.. It catalyses the reaction chloride(in) = chloride(out). The enzyme catalyses hydrogencarbonate(in) = hydrogencarbonate(out). It carries out the reaction ATP + H2O = ADP + phosphate + H(+). Epithelial ion channel that plays an important role in the regulation of epithelial ion and water transport and fluid homeostasis. Mediates the transport of chloride ions across the cell membrane. Possesses an intrinsic ATPase activity and utilizes ATP to gate its channel; the passive flow of anions through the channel is gated by cycles of ATP binding and hydrolysis by the ATP-binding domains. The ion channel is also permeable to HCO(3)(-); selectivity depends on the extracellular chloride concentration. Exerts its function also by modulating the activity of other ion channels and transporters. Contributes to the regulation of the pH and the ion content of the epithelial fluid layer. Modulates the activity of the epithelial sodium channel (ENaC) complex, in part by regulating the cell surface expression of the ENaC complex. May regulate bicarbonate secretion and salvage in epithelial cells by regulating the transporter SLC4A7. Can inhibit the chloride channel activity of ANO1. Plays a role in the chloride and bicarbonate homeostasis during sperm epididymal maturation and capacitation. In Papio anubis (Olive baboon), this protein is Cystic fibrosis transmembrane conductance regulator.